The chain runs to 335 residues: Glycerol-3-phosphate dehydrogenase [NAD(P)+] (335 aa).

Tryptophan 14, arginine 33, and lysine 111 together coordinate NADPH. Sn-glycerol 3-phosphate-binding residues include lysine 111, glycine 140, and serine 142. An NADPH-binding site is contributed by alanine 144. Positions 195, 248, 258, 259, and 260 each coordinate sn-glycerol 3-phosphate. Lysine 195 serves as the catalytic Proton acceptor. NADPH is bound at residue arginine 259. Positions 283 and 285 each coordinate NADPH.

Belongs to the NAD-dependent glycerol-3-phosphate dehydrogenase family.

It localises to the cytoplasm. It catalyses the reaction sn-glycerol 3-phosphate + NAD(+) = dihydroxyacetone phosphate + NADH + H(+). The catalysed reaction is sn-glycerol 3-phosphate + NADP(+) = dihydroxyacetone phosphate + NADPH + H(+). It participates in membrane lipid metabolism; glycerophospholipid metabolism. Catalyzes the reduction of the glycolytic intermediate dihydroxyacetone phosphate (DHAP) to sn-glycerol 3-phosphate (G3P), the key precursor for phospholipid synthesis. The sequence is that of Glycerol-3-phosphate dehydrogenase [NAD(P)+] from Burkholderia mallei (strain NCTC 10247).